Here is a 391-residue protein sequence, read N- to C-terminus: Elongation factor Tu (391 aa).

The region spanning 10–201 (KPHVNIGTIG…AVDEYIPTPA (192 aa)) is the tr-type G domain. Residues 19-26 (GHVDHGKT) form a G1 region. 19-26 (GHVDHGKT) provides a ligand contact to GTP. T26 provides a ligand contact to Mg(2+). Positions 55–59 (GITIS) are G2. The segment at 76 to 79 (DCPG) is G3. Residues 76–80 (DCPGH) and 131–134 (NKVD) each bind GTP. The tract at residues 131-134 (NKVD) is G4. Residues 169 to 171 (SAL) are G5.

This sequence belongs to the TRAFAC class translation factor GTPase superfamily. Classic translation factor GTPase family. EF-Tu/EF-1A subfamily. As to quaternary structure, monomer.

Its subcellular location is the cytoplasm. It carries out the reaction GTP + H2O = GDP + phosphate + H(+). Its function is as follows. GTP hydrolase that promotes the GTP-dependent binding of aminoacyl-tRNA to the A-site of ribosomes during protein biosynthesis. This chain is Elongation factor Tu, found in Cereibacter sphaeroides (strain ATCC 17029 / ATH 2.4.9) (Rhodobacter sphaeroides).